A 517-amino-acid polypeptide reads, in one-letter code: Meiosis-specific transcription factor mei4 (517 aa).

Positions 81 to 172 (KPPCSYATLI…QNFVSVRLHR (92 aa)) form a DNA-binding region, fork-head. The interval 170 to 278 (LHRSHSTDSN…PNAETQEDLP (109 aa)) is disordered. Residues 209–223 (NSFNSSTSTSGSSSN) are compositionally biased toward low complexity. The segment covering 230 to 246 (NDASQPSNQDSSLNSNI) has biased composition (polar residues). Over residues 254–270 (SNVQSNSSSSENVPKPN) the composition is skewed to low complexity.

It localises to the nucleus. Functions as a meiosis-specific transcription factor. Binds to the 5'-GTAAAYA-3' consensus sequence of the promoter of the spo6 gene. The protein is Meiosis-specific transcription factor mei4 (mei4) of Schizosaccharomyces pombe (strain 972 / ATCC 24843) (Fission yeast).